The primary structure comprises 319 residues: Transcription initiation factor IIB 6 (319 aa).

The segment covering 1-16 (MTDARMRSREQERTDE) has biased composition (basic and acidic residues). The tract at residues 1-33 (MTDARMRSREQERTDETESESTDGCPECGGLVV) is disordered. The TFIIB-type zinc finger occupies 21–51 (STDGCPECGGLVVNDEEHGESVCADCGLVVE). Residues Cys-25, Cys-28, Cys-43, and Cys-46 each coordinate Zn(2+). The span at 59 to 74 (PEWRAFDSKEKDEKSR) shows a compositional bias: basic and acidic residues. Residues 59–89 (PEWRAFDSKEKDEKSRVGAPTTNTMHDKGLS) are disordered. Tandem repeats lie at residues 137–220 (GEID…VREL) and 231–312 (SYVP…ELLE).

Belongs to the TFIIB family.

Stabilizes TBP binding to an archaeal box-A promoter. Also responsible for recruiting RNA polymerase II to the pre-initiation complex (DNA-TBP-TFIIB). The chain is Transcription initiation factor IIB 6 from Halobacterium salinarum (strain ATCC 700922 / JCM 11081 / NRC-1) (Halobacterium halobium).